The primary structure comprises 200 residues: Small heat shock protein hspG2 (200 aa).

In terms of domain architecture, sHSP spans 33–200 (NKRIDIIPSM…DNFQIKLKSI (168 aa)). The tract at residues 86 to 139 (KLQQQQQQQSEKSSQSTNNKDDDEPSIEEYEDDTKLKSNLNKNTENKDENKTTS) is disordered. Residues 88–101 (QQQQQQQSEKSSQS) are compositionally biased toward low complexity. Acidic residues predominate over residues 106–117 (DDDEPSIEEYED).

The protein belongs to the small heat shock protein (HSP20) family.

This chain is Small heat shock protein hspG2 (hspG2), found in Dictyostelium discoideum (Social amoeba).